We begin with the raw amino-acid sequence, 299 residues long: Large ribosomal subunit protein uL18 (299 aa).

Belongs to the universal ribosomal protein uL18 family. In terms of assembly, component of the large ribosomal subunit (LSU).

Its subcellular location is the cytoplasm. The protein localises to the nucleus. Functionally, component of the ribosome, a large ribonucleoprotein complex responsible for the synthesis of proteins in the cell. The small ribosomal subunit (SSU) binds messenger RNAs (mRNAs) and translates the encoded message by selecting cognate aminoacyl-transfer RNA (tRNA) molecules. The large subunit (LSU) contains the ribosomal catalytic site termed the peptidyl transferase center (PTC), which catalyzes the formation of peptide bonds, thereby polymerizing the amino acids delivered by tRNAs into a polypeptide chain. The nascent polypeptides leave the ribosome through a tunnel in the LSU and interact with protein factors that function in enzymatic processing, targeting, and the membrane insertion of nascent chains at the exit of the ribosomal tunnel. The polypeptide is Large ribosomal subunit protein uL18 (RpL5) (Bombyx mori (Silk moth)).